The sequence spans 236 residues: Exosome complex component Rrp4 (236 aa).

The S1 motif domain occupies 64–133 (GDKVIGKVIE…EIKESWLTLK (70 aa)). The KH domain occupies 141–199 (EGGHMVLIHASRVPRVIGKGGGMVNMVKELTATRIIIGQNGLIWIDGPIEGVTMAIAAI).

This sequence belongs to the RRP4 family. Component of the archaeal exosome complex. Forms a trimer of Rrp4 and/or Csl4 subunits. The trimer associates with a hexameric ring-like arrangement composed of 3 Rrp41-Rrp42 heterodimers.

The protein resides in the cytoplasm. Its function is as follows. Non-catalytic component of the exosome, which is a complex involved in RNA degradation. Increases the RNA binding and the efficiency of RNA degradation. Confers strong poly(A) specificity to the exosome. This is Exosome complex component Rrp4 from Thermoplasma acidophilum (strain ATCC 25905 / DSM 1728 / JCM 9062 / NBRC 15155 / AMRC-C165).